Here is a 304-residue protein sequence, read N- to C-terminus: Large ribosomal subunit protein uL18 (304 aa).

A disordered region spans residues 285–304; the sequence is LNALNSSAGADDDDEEEDDE. The span at 294–304 shows a compositional bias: acidic residues; sequence ADDDDEEEDDE.

The protein belongs to the universal ribosomal protein uL18 family. As to quaternary structure, component of the large ribosomal subunit (LSU).

The protein localises to the cytoplasm. It localises to the nucleus. Functionally, component of the ribosome, a large ribonucleoprotein complex responsible for the synthesis of proteins in the cell. The small ribosomal subunit (SSU) binds messenger RNAs (mRNAs) and translates the encoded message by selecting cognate aminoacyl-transfer RNA (tRNA) molecules. The large subunit (LSU) contains the ribosomal catalytic site termed the peptidyl transferase center (PTC), which catalyzes the formation of peptide bonds, thereby polymerizing the amino acids delivered by tRNAs into a polypeptide chain. The nascent polypeptides leave the ribosome through a tunnel in the LSU and interact with protein factors that function in enzymatic processing, targeting, and the membrane insertion of nascent chains at the exit of the ribosomal tunnel. The protein is Large ribosomal subunit protein uL18 (RPL5A) of Oryza sativa subsp. indica (Rice).